The following is a 252-amino-acid chain: MLLIKSIPAFNDNYIWLIHNNDNHCVVVDPGEAAPVLACLKEHGLILDAILITHHHHDHIGGVPELVRQFPNINVVGPENEPIPTLTHPVGDGDFVELFNEKFMVLGVEGHTKGHIAYIGDEKLFCGDTLFSAGCGRLFEGTAEQMFHSLQKLAALPDETEVYCAHEYTASNLAFALAVEPDNDYLQQYREKVLRLRANGKATIPTTMQREKLINPFLRTSEASVKQAVSSKVENDSEVATFAALRRWKDEF.

Zn(2+)-binding residues include His54, His56, Asp58, His59, His111, Asp128, and His166.

The protein belongs to the metallo-beta-lactamase superfamily. Glyoxalase II family. As to quaternary structure, monomer. The cofactor is Zn(2+).

The catalysed reaction is an S-(2-hydroxyacyl)glutathione + H2O = a 2-hydroxy carboxylate + glutathione + H(+). Its pathway is secondary metabolite metabolism; methylglyoxal degradation; (R)-lactate from methylglyoxal: step 2/2. Thiolesterase that catalyzes the hydrolysis of S-D-lactoyl-glutathione to form glutathione and D-lactic acid. The polypeptide is Hydroxyacylglutathione hydrolase (Aliivibrio salmonicida (strain LFI1238) (Vibrio salmonicida (strain LFI1238))).